Reading from the N-terminus, the 239-residue chain is Ribosomal RNA small subunit methyltransferase G (239 aa).

S-adenosyl-L-methionine-binding positions include Gly-77, Phe-82, 128 to 129 (AE), and Arg-146. Residues 217 to 239 (RRQTSKKYPRKPGTPNKSPLVES) form a disordered region.

Belongs to the methyltransferase superfamily. RNA methyltransferase RsmG family.

It is found in the cytoplasm. In terms of biological role, specifically methylates the N7 position of guanine in position 535 of 16S rRNA. This is Ribosomal RNA small subunit methyltransferase G from Staphylococcus epidermidis (strain ATCC 12228 / FDA PCI 1200).